The primary structure comprises 2334 residues: Centriolin (2334 aa).

The disordered stretch occupies residues 1–70 (MKKGSERRLS…ESTVPLEPQQ (70 aa)). The span at 21–38 (PGPSSLRSSMRSRSLSPL) shows a compositional bias: low complexity. LRR repeat units lie at residues 126–147 (KLEVLNLSYNLIVKIEKVDKLL), 148–169 (RLRELNLSYNKISKIEGLENMC), 170–191 (NLQKLNLAGNEIEHIPVWFAKK), and 194–215 (SLRVLNLKGNKISSLQDVSKLK). The LRRCT domain maps to 228 to 266 (NPVVALPHYLQFIIFHLRSLESLEGQPVTTQDRQEAFER). Coiled-coil stretches lie at residues 265 to 343 (ERFS…VELT) and 437 to 800 (DLQL…LNHV). Disordered regions lie at residues 542–562 (DSLDPKDPKHSHMKAQKRGKE) and 751–771 (SLRDALGKAQSSEEKQQENNE). Position 832 is a phosphoserine (S832). Residues 858-1102 (EKEEAQVRER…ITRLRDVLNL (245 aa)) adopt a coiled-coil conformation. Disordered regions lie at residues 1154–1198 (SKVS…PLPA), 1213–1245 (KSFSKREDADSGGDSQEESGLDDQEEPPFVPPP), and 1338–1360 (LKSKQREERRQKASTQHSEEEVD). Residues 1227 to 1238 (SQEESGLDDQEE) are compositionally biased toward acidic residues. Residues 1320-2169 (EHHNLENEVS…MRTLKSEVKD (850 aa)) are a coiled coil. A Phosphoserine modification is found at S1478. Residues 1951–2121 (MMFQKLQKER…ELVAQDNHER (171 aa)) form a required for centrosome localization region. The tract at residues 1988–2334 (QKSRLKQLLT…PLEEPNSYRH (347 aa)) is sufficient for interaction with HOOK2. Residues 2291–2307 (TSTSTDSASSPSLPSLV) show a composition bias toward low complexity. The disordered stretch occupies residues 2291-2334 (TSTSTDSASSPSLPSLVEDSQHGHSQSSFQVLQVPLEEPNSYRH).

Interacts with HOOK2. Interacts with EXOC6 and SNAPIN. Associates with the exocyst complex. Highly expressed in liver.

It localises to the cytoplasm. The protein localises to the cytoskeleton. The protein resides in the microtubule organizing center. It is found in the centrosome. Its subcellular location is the midbody. It localises to the midbody ring. In terms of biological role, involved in cell cycle progression and cytokinesis. During the late steps of cytokinesis, anchors exocyst and SNARE complexes at the midbody, thereby allowing secretory vesicle-mediated abscission. This is Centriolin (Cntrl) from Mus musculus (Mouse).